A 446-amino-acid chain; its full sequence is Phosphoglucosamine mutase (446 aa).

The active-site Phosphoserine intermediate is serine 101. The Mg(2+) site is built by serine 101, aspartate 240, aspartate 242, and aspartate 244. Serine 101 is subject to Phosphoserine.

The protein belongs to the phosphohexose mutase family. Mg(2+) serves as cofactor. Activated by phosphorylation.

The catalysed reaction is alpha-D-glucosamine 1-phosphate = D-glucosamine 6-phosphate. In terms of biological role, catalyzes the conversion of glucosamine-6-phosphate to glucosamine-1-phosphate. This is Phosphoglucosamine mutase from Pseudomonas putida (strain W619).